The primary structure comprises 110 residues: U1-lycotoxin-Ls1jj (110 aa).

The signal sequence occupies residues M1–A20. Residues E21 to R44 constitute a propeptide that is removed on maturation. 4 disulfides stabilise this stretch: C47–C62, C54–C71, C61–C89, and C73–C87.

This sequence belongs to the neurotoxin 19 (CSTX) family. 03 subfamily. In terms of tissue distribution, expressed by the venom gland.

The protein resides in the secreted. In Lycosa singoriensis (Wolf spider), this protein is U1-lycotoxin-Ls1jj.